Consider the following 511-residue polypeptide: Sodium/proline symporter (511 aa).

Helical transmembrane passes span 16–36, 54–74, 85–105, 139–159, 175–195, 199–219, 246–266, 284–304, 327–347, 381–401, 407–427, 438–458, and 467–487; these read WQTY…GFYG, IGPY…WMIM, LSAI…YFVV, IISG…GFVS, GLLI…YLAV, DFFQ…VALL, VLGI…PHII, LGIS…LTGI, ILFH…AIMS, FVLI…TIAW, ILNL…PLVL, AGAI…ISWI, and FFGM…TYIV.

The protein belongs to the sodium:solute symporter (SSF) (TC 2.A.21) family.

Its subcellular location is the cell membrane. It catalyses the reaction L-proline(in) + Na(+)(in) = L-proline(out) + Na(+)(out). Catalyzes the sodium-dependent uptake of extracellular L-proline. The chain is Sodium/proline symporter (putP) from Staphylococcus epidermidis (strain ATCC 12228 / FDA PCI 1200).